The primary structure comprises 770 residues: Lysine-specific histone demethylase 1 (770 aa).

Residues 1-21 (MSSDTGSEYLDEEIRGDELGP) are disordered. In terms of domain architecture, SWIRM spans 28 to 126 (LAAAASAARL…FGRYVRSTKI (99 aa)). 137–165 (VIVIGAGAAGISAATQLESFGFDVIVLEA) is a binding site for FAD. The tract at residues 718–739 (NEAVADIPNAPNAPNAQKPEEI) is disordered.

Belongs to the flavin monoamine oxidase family. In terms of assembly, probably part of a large repressor complex. Interacts with CoREST protein spr-1. Interacts with chromobox protein homolog hpl-1. It depends on FAD as a cofactor.

It is found in the nucleus. It catalyses the reaction N(6),N(6)-dimethyl-L-lysyl(4)-[histone H3] + 2 A + 2 H2O = L-lysyl(4)-[histone H3] + 2 formaldehyde + 2 AH2. Histone demethylase that specifically demethylates 'Lys-4' of histone H3, a specific tag for epigenetic transcriptional activation, thereby acting as a corepressor. Acts by oxidizing the substrate by FAD to generate the corresponding imine that is subsequently hydrolyzed. Demethylates both mono- and di-methylated 'Lys-4' of histone H3. May be involved in H3 demethylation in mitotic cells including gut and embryonic cells. Participates in the transcriptional repression of the presenilin protein hop-1. May act via the formation of a multiprotein complex that remodel or modify the chromatin. Together with met-2, set-17 and set-26, required for transgenerational fertility. Plays a role in developmental growth and lifespan regulation in response to ultraviolet-induced damage. The protein is Lysine-specific histone demethylase 1 of Caenorhabditis elegans.